The primary structure comprises 158 residues: SsrA-binding protein (158 aa).

A disordered region spans residues 135–158 (DKRKTLKDRDWERDKQRGFKKDLD). Residues 141–158 (KDRDWERDKQRGFKKDLD) show a composition bias toward basic and acidic residues.

Belongs to the SmpB family.

Its subcellular location is the cytoplasm. Required for rescue of stalled ribosomes mediated by trans-translation. Binds to transfer-messenger RNA (tmRNA), required for stable association of tmRNA with ribosomes. tmRNA and SmpB together mimic tRNA shape, replacing the anticodon stem-loop with SmpB. tmRNA is encoded by the ssrA gene; the 2 termini fold to resemble tRNA(Ala) and it encodes a 'tag peptide', a short internal open reading frame. During trans-translation Ala-aminoacylated tmRNA acts like a tRNA, entering the A-site of stalled ribosomes, displacing the stalled mRNA. The ribosome then switches to translate the ORF on the tmRNA; the nascent peptide is terminated with the 'tag peptide' encoded by the tmRNA and targeted for degradation. The ribosome is freed to recommence translation, which seems to be the essential function of trans-translation. The protein is SsrA-binding protein of Psychrobacter arcticus (strain DSM 17307 / VKM B-2377 / 273-4).